Reading from the N-terminus, the 459-residue chain is Argininosuccinate lyase (459 aa).

It belongs to the lyase 1 family. Argininosuccinate lyase subfamily.

It is found in the cytoplasm. It carries out the reaction 2-(N(omega)-L-arginino)succinate = fumarate + L-arginine. It participates in amino-acid biosynthesis; L-arginine biosynthesis; L-arginine from L-ornithine and carbamoyl phosphate: step 3/3. The chain is Argininosuccinate lyase from Desulforudis audaxviator (strain MP104C).